The following is a 208-amino-acid chain: NADH-ubiquinone oxidoreductase chain 4 (208 aa).

6 helical membrane-spanning segments follow: residues 23 to 43, 60 to 80, 93 to 113, 114 to 134, 147 to 167, and 185 to 205; these read VWIN…NLLW, PLSA…LLAS, KLYI…FSAN, ELIM…IIIT, IYFL…LIYI, and PINQ…AFMV.

Belongs to the complex I subunit 4 family. In terms of assembly, core subunit of respiratory chain NADH dehydrogenase (Complex I) which is composed of 45 different subunits.

It localises to the mitochondrion inner membrane. It carries out the reaction a ubiquinone + NADH + 5 H(+)(in) = a ubiquinol + NAD(+) + 4 H(+)(out). Functionally, core subunit of the mitochondrial membrane respiratory chain NADH dehydrogenase (Complex I) which catalyzes electron transfer from NADH through the respiratory chain, using ubiquinone as an electron acceptor. Essential for the catalytic activity and assembly of complex I. The sequence is that of NADH-ubiquinone oxidoreductase chain 4 (MT-ND4) from Microtus pennsylvanicus (Meadow vole).